Consider the following 84-residue polypeptide: uncharacterized protein (84 aa).

This sequence belongs to the csb family.

This is an uncharacterized protein from Dictyostelium discoideum (Social amoeba).